Here is a 415-residue protein sequence, read N- to C-terminus: MILRIRSRDGTDRITVPDPAAATVGDLQRLIAARVTVPVPLQRLSLDPALLLPSSASAALLADPAAPLSSLRLSNGSFVYLSYPPDARSSQPPPPKALSAAGSFGKKMTMDDLIARQIRVTRQEAPLCAAASFDRDSANAFQLHVAESLAFATKRAGFLYGRVDADTKEVFVDFIYEPPQVGTEDVVQLMRDAQEEARVDAIAHGLGMRRVGLVFTQAVGRKTSDTGEYTMSNREVLQATELQAEGGIPEWVTAIVKLEVGDDGSGDVHFEAFQMSEICVKLFKDGVLETEIGDKDDPRLSKMRKEVVAGGKDTMEVDNDFFLVPVKISDHQGPLSTGFPIENRGNPVAMSALKSHLDRAKHLPFVKRISDFHLLLLVAAFLDIKADVPALTACVKNQSVVPEGYQLLIESLAGA.

The MPN domain maps to 130–279 (AASFDRDSAN…FEAFQMSEIC (150 aa)).

It belongs to the NPL4 family.

Its subcellular location is the endoplasmic reticulum. The protein operates within protein degradation; proteasomal ubiquitin-dependent pathway. Functionally, may be part of a complex that binds ubiquitinated proteins and that is necessary for the export of misfolded proteins from the ER to the cytoplasm, where they are degraded by the proteasome. The chain is NPL4-like protein from Oryza sativa subsp. japonica (Rice).